Here is a 132-residue protein sequence, read N- to C-terminus: MVNFCISDAEIGINVVIVLFPVNGLVTAPSVLYPLEYFSLVSSILEHSMICLSLILAGKIDFLFFIILLLAIVDITSGKYFSTFSISSIFKPAIYSAILLLVSIPFLAKKSYVVFTISVLTGSSISLSTSAE.

This is an uncharacterized protein from Homo sapiens (Human).